The following is a 92-amino-acid chain: YcgL domain-containing protein Shewana3_2381 (92 aa).

One can recognise a YcgL domain in the interval 1-85 (MLCAVYKSSR…PQVNLLAEHR (85 aa)).

This chain is YcgL domain-containing protein Shewana3_2381, found in Shewanella sp. (strain ANA-3).